We begin with the raw amino-acid sequence, 355 residues long: D-alanine--D-alanine ligase (355 aa).

The 208-residue stretch at 143–350 folds into the ATP-grasp domain; sequence KKIFSHLEIP…IDQLVAKLVD (208 aa). 178–233 is a binding site for ATP; that stretch reads IEKLKLPVFVKPANSGSSLGISKAKTRSEIIKALQKAWEIDSRIVIEEGLDVRELE. Mg(2+) contacts are provided by Asp303, Glu317, and Asn319.

This sequence belongs to the D-alanine--D-alanine ligase family. It depends on Mg(2+) as a cofactor. Mn(2+) is required as a cofactor.

Its subcellular location is the cytoplasm. It catalyses the reaction 2 D-alanine + ATP = D-alanyl-D-alanine + ADP + phosphate + H(+). Its pathway is cell wall biogenesis; peptidoglycan biosynthesis. Functionally, cell wall formation. The polypeptide is D-alanine--D-alanine ligase (Prochlorococcus marinus subsp. pastoris (strain CCMP1986 / NIES-2087 / MED4)).